Consider the following 152-residue polypeptide: Ribosomal RNA large subunit methyltransferase H (152 aa).

S-adenosyl-L-methionine is bound by residues L71, G101, and L120–F125.

This sequence belongs to the RNA methyltransferase RlmH family. As to quaternary structure, homodimer.

Its subcellular location is the cytoplasm. It carries out the reaction pseudouridine(1915) in 23S rRNA + S-adenosyl-L-methionine = N(3)-methylpseudouridine(1915) in 23S rRNA + S-adenosyl-L-homocysteine + H(+). In terms of biological role, specifically methylates the pseudouridine at position 1915 (m3Psi1915) in 23S rRNA. This chain is Ribosomal RNA large subunit methyltransferase H, found in Thermosipho melanesiensis (strain DSM 12029 / CIP 104789 / BI429).